Consider the following 368-residue polypeptide: Methionine import ATP-binding protein MetN (368 aa).

An ABC transporter domain is found at 5–260; it reads IELNNLSVQF…PKEALTKQFI (256 aa). 41-48 lines the ATP pocket; the sequence is GYSGAGKS.

This sequence belongs to the ABC transporter superfamily. Methionine importer (TC 3.A.1.24) family. The complex is composed of two ATP-binding proteins (MetN), two transmembrane proteins (MetI) and a solute-binding protein (MetQ).

It localises to the cell membrane. It carries out the reaction L-methionine(out) + ATP + H2O = L-methionine(in) + ADP + phosphate + H(+). It catalyses the reaction D-methionine(out) + ATP + H2O = D-methionine(in) + ADP + phosphate + H(+). Its function is as follows. Part of the ABC transporter complex MetNIQ involved in methionine import. Responsible for energy coupling to the transport system. The protein is Methionine import ATP-binding protein MetN of Lactococcus lactis subsp. lactis (strain IL1403) (Streptococcus lactis).